We begin with the raw amino-acid sequence, 628 residues long: DNA mismatch repair protein MutL (628 aa).

Residues 335-411 form a disordered region; that stretch reads SVDIEPESEQ…ASRNSEVSLP (77 aa). The segment covering 343 to 353 has biased composition (polar residues); sequence EQTTAWQTSPT.

This sequence belongs to the DNA mismatch repair MutL/HexB family.

In terms of biological role, this protein is involved in the repair of mismatches in DNA. It is required for dam-dependent methyl-directed DNA mismatch repair. May act as a 'molecular matchmaker', a protein that promotes the formation of a stable complex between two or more DNA-binding proteins in an ATP-dependent manner without itself being part of a final effector complex. The protein is DNA mismatch repair protein MutL of Shewanella pealeana (strain ATCC 700345 / ANG-SQ1).